Reading from the N-terminus, the 301-residue chain is MSAVITLTPLNESFQTKKLVISPSTIYKIGRHTNKSTSPSPSNLFFNSKVLSRQHAELWLDKDTLSVYIRDVKSSNGTFVNETRLSPENKPSAPCKLNSGDIVDFGVDIYNEDEIVHQKVSAQVRIVVRGATFATTPARSLDSEVMLDSIMRQMVFQYQRCVELNENLESLENGVEEVSKSLSWLETGKTRDNRNNHHYSRKSSPHISSLAVPSTKHLDGERDRNLKRSTSPLSSSPFVTEAALNEAELAKTNLEAWKARAFTAEARLSSKNKSWQEKKYLVLSPFFIAVAGIIVYMGYWR.

The FHA domain occupies 27–85 (YKIGRHTNKSTSPSPSNLFFNSKVLSRQHAELWLDKDTLSVYIRDVKSSNGTFVNETRL). The tract at residues 187–236 (TGKTRDNRNNHHYSRKSSPHISSLAVPSTKHLDGERDRNLKRSTSPLSSS) is disordered. S204 bears the Phosphoserine mark. Basic and acidic residues predominate over residues 216–226 (KHLDGERDRNL). S231 carries the phosphoserine modification.

Interacts with sad1.

It localises to the nucleus. This is an uncharacterized protein from Schizosaccharomyces pombe (strain 972 / ATCC 24843) (Fission yeast).